A 59-amino-acid chain; its full sequence is Embryonic testis differentiation protein homolog A (59 aa).

Residues methionine 1–proline 10 are compositionally biased toward basic and acidic residues. The segment at methionine 1–lysine 25 is disordered.

The chain is Embryonic testis differentiation protein homolog A from Homo sapiens (Human).